Consider the following 697-residue polypeptide: Pentatricopeptide repeat-containing protein At2g13600 (697 aa).

16 PPR repeats span residues 18–53 (DSSP…GFSN), 54–84 (EIFI…MPQR), 85–115 (NIYT…MPER), 116–150 (DQCT…GFVL), 151–185 (NEYS…PFLS), 186–216 (DVYI…MGDR), 217–251 (NVVS…RVEP), 252–282 (DEVT…VVKN), 288–322 (DIIL…NVIA), 324–349 (TSMI…MAER), 350–384 (NVVS…SVCP), 385–419 (THYS…GFKF), 426–456 (DIFV…MMER), 457–491 (DCVS…GEKP), 492–527 (DHIT…GVAP), and 528–558 (LRDH…MPMQ). Residues 563 to 638 (IWGSLLAACK…QPGCSWIKIQ (76 aa)) are type E motif. Residues 639-669 (GHDHVFMVKDKSHPRKKQIHSLLDILIAEMR) form a type E(+) motif region.

This sequence belongs to the PPR family. PCMP-E subfamily.

The protein is Pentatricopeptide repeat-containing protein At2g13600 (PCMP-E76) of Arabidopsis thaliana (Mouse-ear cress).